Here is a 352-residue protein sequence, read N- to C-terminus: Threonine synthase (352 aa).

Lys-59 bears the N6-(pyridoxal phosphate)lysine mark. Pyridoxal 5'-phosphate contacts are provided by residues Asn-85, 185–189 (GNAGN), and Thr-314.

This sequence belongs to the threonine synthase family. Requires pyridoxal 5'-phosphate as cofactor.

It carries out the reaction O-phospho-L-homoserine + H2O = L-threonine + phosphate. Its pathway is amino-acid biosynthesis; L-threonine biosynthesis; L-threonine from L-aspartate: step 5/5. Catalyzes the gamma-elimination of phosphate from L-phosphohomoserine and the beta-addition of water to produce L-threonine. The polypeptide is Threonine synthase (thrC) (Bacillus subtilis (strain 168)).